A 194-amino-acid polypeptide reads, in one-letter code: Type II secretion system protein H (194 aa).

Positions 1–6 (MTATRG) are cleaved as a propeptide — leader sequence. Phe-7 bears the N-methylphenylalanine mark. The chain crosses the membrane as a helical span at residues 12–32 (ILLVLVLVSASAVAVIATFPV).

It belongs to the GSP H family. As to quaternary structure, type II secretion is composed of four main components: the outer membrane complex, the inner membrane complex, the cytoplasmic secretion ATPase and the periplasm-spanning pseudopilus. Interacts with core component EpsG. In terms of processing, cleaved by prepilin peptidase. Methylated by prepilin peptidase at the amino group of the N-terminal phenylalanine once the leader sequence is cleaved by prepilin peptidase.

Its subcellular location is the cell inner membrane. Its function is as follows. Component of the type II secretion system required for the energy-dependent secretion of extracellular factors such as proteases and toxins from the periplasm. Part of the pseudopilus tip complex that is critical for the recognition and binding of secretion substrates. In Vibrio cholerae serotype O1 (strain ATCC 39315 / El Tor Inaba N16961), this protein is Type II secretion system protein H (epsH).